Consider the following 598-residue polypeptide: Elongation factor 4 (598 aa).

In terms of domain architecture, tr-type G spans 5–187 (SHIRNFSIIA…RLVATIPAPI (183 aa)). GTP-binding positions include 17–22 (DHGKST) and 134–137 (NKID).

This sequence belongs to the TRAFAC class translation factor GTPase superfamily. Classic translation factor GTPase family. LepA subfamily.

It localises to the cell inner membrane. It carries out the reaction GTP + H2O = GDP + phosphate + H(+). Its function is as follows. Required for accurate and efficient protein synthesis under certain stress conditions. May act as a fidelity factor of the translation reaction, by catalyzing a one-codon backward translocation of tRNAs on improperly translocated ribosomes. Back-translocation proceeds from a post-translocation (POST) complex to a pre-translocation (PRE) complex, thus giving elongation factor G a second chance to translocate the tRNAs correctly. Binds to ribosomes in a GTP-dependent manner. This is Elongation factor 4 from Pseudomonas fluorescens (strain Pf0-1).